A 350-amino-acid chain; its full sequence is Core protein VP7 (350 aa).

N-linked (GlcNAc...) asparagine; by host glycosylation is present at N45.

The protein belongs to the orbivirus VP7 family. In terms of assembly, homotrimer.

Its subcellular location is the virion. Major structural core protein; binds to structural protein VP3. Constitutes the surface of the AHSV core. The protein is Core protein VP7 (Segment-7) of African horse sickness virus (AHSV).